The chain runs to 254 residues: MAGSVLKIAGRRLSQHTGSGAPVLLRQMFEPKSCTYTYLLGDRESREAVLIDPVLETAQRDAQLVKELGLRLLYAVNTHCHADHITGSGLLRSLLPGCQSVISRLSGAQADWHIEDGDSIQFGRFALETRASPGHTPGCVTFVLNDHSMAFTGDALLIRGCGRTDFQQGCAETLYHSVHEKIFTLPGNCLIYPAHDYHGLTVSTVEEERTLNPRLTLSCEEFVKVMDKLNLPKPQQIDFAVPANMRCGIQTPPS.

A mitochondrion-targeting transit peptide spans 1-7 (MAGSVLK). A phosphoserine mark is found at S14 and S19. The residue at position 32 (K32) is an N6-acetyllysine; alternate. K32 is modified (N6-succinyllysine; alternate). K66 is modified (N6-acetyllysine). Fe cation-binding residues include H79, H135, and D154.

Belongs to the metallo-beta-lactamase superfamily. Glyoxalase II family. In terms of assembly, homodimer. Monomer. Interacts with TST. May interact with RELA. Requires Fe(2+) as cofactor.

It is found in the cytoplasm. The protein resides in the nucleus. It localises to the mitochondrion matrix. It catalyses the reaction S-sulfanylglutathione + O2 + H2O = sulfite + glutathione + 2 H(+). Glutathione increases enzyme activity. In terms of biological role, sulfur dioxygenase that plays an essential role in hydrogen sulfide catabolism in the mitochondrial matrix. Hydrogen sulfide (H(2)S) is first oxidized by SQRDL, giving rise to cysteine persulfide residues. ETHE1 consumes molecular oxygen to catalyze the oxidation of the persulfide, once it has been transferred to a thiophilic acceptor, such as glutathione (R-SSH). Plays an important role in metabolic homeostasis in mitochondria by metabolizing hydrogen sulfide and preventing the accumulation of supraphysiological H(2)S levels that have toxic effects, due to the inhibition of cytochrome c oxidase. First described as a protein that can shuttle between the nucleus and the cytoplasm and suppress p53-induced apoptosis by sequestering the transcription factor RELA/NFKB3 in the cytoplasm and preventing its accumulation in the nucleus. This is Persulfide dioxygenase ETHE1, mitochondrial (ETHE1) from Bos taurus (Bovine).